A 313-amino-acid polypeptide reads, in one-letter code: Ribosomal RNA small subunit methyltransferase H (313 aa).

S-adenosyl-L-methionine is bound by residues 35–37 (GGH), aspartate 55, phenylalanine 80, aspartate 102, and glutamine 109.

This sequence belongs to the methyltransferase superfamily. RsmH family.

It localises to the cytoplasm. The enzyme catalyses cytidine(1402) in 16S rRNA + S-adenosyl-L-methionine = N(4)-methylcytidine(1402) in 16S rRNA + S-adenosyl-L-homocysteine + H(+). In terms of biological role, specifically methylates the N4 position of cytidine in position 1402 (C1402) of 16S rRNA. This is Ribosomal RNA small subunit methyltransferase H from Shewanella denitrificans (strain OS217 / ATCC BAA-1090 / DSM 15013).